The following is a 453-amino-acid chain: 3-phosphoshikimate 1-carboxyvinyltransferase (453 aa).

The span at 1-12 (MDVNVTSSTVRG) shows a compositional bias: polar residues. Residues 1 to 21 (MDVNVTSSTVRGTTRAPPSKS) form a disordered region. 3-phosphoshikimate-binding residues include Lys-20, Ser-21, and Arg-25. Residue Lys-20 participates in phosphoenolpyruvate binding. Phosphoenolpyruvate contacts are provided by Gly-97 and Arg-125. 6 residues coordinate 3-phosphoshikimate: Ser-170, Ser-171, Gln-172, Ser-198, Asp-330, and Lys-357. Gln-172 lines the phosphoenolpyruvate pocket. Asp-330 serves as the catalytic Proton acceptor. Residues Arg-361 and Arg-404 each contribute to the phosphoenolpyruvate site.

The protein belongs to the EPSP synthase family. As to quaternary structure, monomer.

It localises to the cytoplasm. The enzyme catalyses 3-phosphoshikimate + phosphoenolpyruvate = 5-O-(1-carboxyvinyl)-3-phosphoshikimate + phosphate. It participates in metabolic intermediate biosynthesis; chorismate biosynthesis. Its function is as follows. Catalyzes the transfer of the enolpyruvyl moiety of phosphoenolpyruvate (PEP) to the 5-hydroxyl of shikimate-3-phosphate (S3P) to produce enolpyruvyl shikimate-3-phosphate and inorganic phosphate. This is 3-phosphoshikimate 1-carboxyvinyltransferase from Halorubrum lacusprofundi (strain ATCC 49239 / DSM 5036 / JCM 8891 / ACAM 34).